Here is a 204-residue protein sequence, read N- to C-terminus: Holliday junction branch migration complex subunit RuvA (204 aa).

The interval 1-63 (MIASLRGTVI…EDAMKLYGFI (63 aa)) is domain I. Residues 64-142 (DDQSREMFAL…AYTVGVVDDG (79 aa)) are domain II. A flexible linker region spans residues 143–151 (APTAPTQGV). The domain III stretch occupies residues 152 to 204 (APVVVVDQVTQALTGLGFTEKQADDAVAAVLSADPGLDTSAALRAALAKLGGK).

This sequence belongs to the RuvA family. As to quaternary structure, homotetramer. Forms an RuvA(8)-RuvB(12)-Holliday junction (HJ) complex. HJ DNA is sandwiched between 2 RuvA tetramers; dsDNA enters through RuvA and exits via RuvB. An RuvB hexamer assembles on each DNA strand where it exits the tetramer. Each RuvB hexamer is contacted by two RuvA subunits (via domain III) on 2 adjacent RuvB subunits; this complex drives branch migration. In the full resolvosome a probable DNA-RuvA(4)-RuvB(12)-RuvC(2) complex forms which resolves the HJ.

It is found in the cytoplasm. Functionally, the RuvA-RuvB-RuvC complex processes Holliday junction (HJ) DNA during genetic recombination and DNA repair, while the RuvA-RuvB complex plays an important role in the rescue of blocked DNA replication forks via replication fork reversal (RFR). RuvA specifically binds to HJ cruciform DNA, conferring on it an open structure. The RuvB hexamer acts as an ATP-dependent pump, pulling dsDNA into and through the RuvAB complex. HJ branch migration allows RuvC to scan DNA until it finds its consensus sequence, where it cleaves and resolves the cruciform DNA. The sequence is that of Holliday junction branch migration complex subunit RuvA from Corynebacterium efficiens (strain DSM 44549 / YS-314 / AJ 12310 / JCM 11189 / NBRC 100395).